The primary structure comprises 43 residues: Mu-conotoxin-like CalTx 12.2.1E (43 aa).

Residue R1 is a propeptide. 4 disulfides stabilise this stretch: C4/C16, C11/C24, C18/C29, and C23/C35. 6'-bromotryptophan is present on W31. P36 carries the post-translational modification 4-hydroxyproline. W40 is modified (6'-bromotryptophan).

Expressed by the venom duct.

The protein localises to the secreted. Functionally, mu-conotoxins block voltage-gated sodium channels. This toxin reversibly blocks voltage-gated sodium channel in cephalopods, with no alteration in the voltage dependence of sodium conductance or on the kinetics of inactivation. The protein is Mu-conotoxin-like CalTx 12.2.1E of Californiconus californicus (California cone).